The following is a 494-amino-acid chain: Putative NAD kinase 3 (494 aa).

This sequence belongs to the NAD kinase family.

It catalyses the reaction NAD(+) + ATP = ADP + NADP(+) + H(+). The protein is Putative NAD kinase 3 of Oryza sativa subsp. japonica (Rice).